Reading from the N-terminus, the 1028-residue chain is GPI inositol-deacylase (1028 aa).

The helical transmembrane segment at 51 to 71 (VFGLGLLLFCIVCMAYLSPFL) threads the bilayer. N166 carries an N-linked (GlcNAc...) asparagine glycan. Residue S231 is part of the active site. N299, N530, N586, and N679 each carry an N-linked (GlcNAc...) asparagine glycan. 8 consecutive transmembrane segments (helical) span residues 699–719 (LAVA…QFAL), 740–760 (FWLK…ISFI), 799–819 (WIGP…AFGI), 867–887 (IMIL…LLFL), 915–935 (SYLL…FVFL), 948–968 (SHHN…NAGL), 979–999 (ISKL…VIYG), and 1002–1022 (NLFW…FTSL).

The protein belongs to the GPI inositol-deacylase family.

It is found in the endoplasmic reticulum membrane. In terms of biological role, involved in inositol deacylation of GPI-anchored proteins which plays important roles in the quality control and ER-associated degradation of GPI-anchored proteins. This is GPI inositol-deacylase (BST1) from Eremothecium gossypii (strain ATCC 10895 / CBS 109.51 / FGSC 9923 / NRRL Y-1056) (Yeast).